A 524-amino-acid chain; its full sequence is GMP synthase [glutamine-hydrolyzing] (524 aa).

The 190-residue stretch at 10 to 199 (PVLVVDFGAQ…LTEVAGLEQT (190 aa)) folds into the Glutamine amidotransferase type-1 domain. Residue C87 is the Nucleophile of the active site. Catalysis depends on residues H173 and E175. Positions 200 to 398 (WTSANIAQQL…LGLPEEIVAR (199 aa)) constitute a GMPS ATP-PPase domain. 228–234 (SGGVDSA) is a binding site for ATP.

As to quaternary structure, homodimer.

The enzyme catalyses XMP + L-glutamine + ATP + H2O = GMP + L-glutamate + AMP + diphosphate + 2 H(+). It participates in purine metabolism; GMP biosynthesis; GMP from XMP (L-Gln route): step 1/1. Functionally, catalyzes the synthesis of GMP from XMP. The sequence is that of GMP synthase [glutamine-hydrolyzing] (guaA) from Corynebacterium ammoniagenes (Brevibacterium ammoniagenes).